A 262-amino-acid polypeptide reads, in one-letter code: Serine O-acetyltransferase (262 aa).

Cys-107 functions as the Acyl-thioester intermediate in the catalytic mechanism. Lys-128 serves as a coordination point for substrate. The Proton acceptor role is filled by His-200. Glu-202 is a catalytic residue. Arg-214 is a substrate binding site.

This sequence belongs to the MetA family.

The protein resides in the cytoplasm. The enzyme catalyses L-serine + acetyl-CoA = O-acetyl-L-serine + CoA. The catalysed reaction is L-homoserine + acetyl-CoA = O-acetyl-L-homoserine + CoA. It functions in the pathway amino-acid biosynthesis; L-cysteine biosynthesis; L-cysteine from L-serine: step 1/2. Its function is as follows. Transfers an acetyl group from acetyl-CoA to L-serine, forming acetyl-L-serine. In vitro, also has homoserine acetyl transferase activity. In Lactobacillus acidophilus, this protein is Serine O-acetyltransferase.